Here is a 65-residue protein sequence, read N- to C-terminus: Translational regulator CsrA (65 aa).

This sequence belongs to the CsrA/RsmA family. Homodimer; the beta-strands of each monomer intercalate to form a hydrophobic core, while the alpha-helices form wings that extend away from the core.

It is found in the cytoplasm. Functionally, a key translational regulator that binds mRNA to regulate translation initiation and/or mRNA stability. Mediates global changes in gene expression, shifting from rapid growth to stress survival by linking envelope stress, the stringent response and the catabolite repression systems. Usually binds in the 5'-UTR; binding at or near the Shine-Dalgarno sequence prevents ribosome-binding, repressing translation, binding elsewhere in the 5'-UTR can activate translation and/or stabilize the mRNA. Its function is antagonized by small RNA(s). The protein is Translational regulator CsrA of Pseudomonas putida (strain ATCC 47054 / DSM 6125 / CFBP 8728 / NCIMB 11950 / KT2440).